The primary structure comprises 589 residues: Ectoderm-neural cortex protein 1 (589 aa).

The region spanning threonine 46–glutamate 114 is the BTB domain. 6 Kelch repeats span residues alanine 296–cysteine 340, lysine 341–histidine 388, cysteine 389–leucine 444, leucine 446–asparagine 492, isoleucine 494–asparagine 538, and lysine 539–lysine 585.

In terms of assembly, binds to RB1. Hypophosphorylated RB1 associates with ENC1 during neuronal differentiation, while hyperphosphorylated RB1 associates with ENC1 in undifferentiating cells. Part of a complex that contains CUL3, RBX1 and ENC1. Interacts indirectly with KEAP1. In terms of processing, ubiquitinated by E3 ubiquitin ligase complex formed by CUL3 and RBX1 and probably targeted for proteasome-independent degradation. Quinone-induced oxidative stress increases its ubiquitination. As to expression, detected in fetal brain tissue, moderate expression in fetal heart, lung and kidney. Highly expressed in adult brain, particularly high in the hippocampus and amygdala, and spinal cord. Detectable in adult pancreas. May be down-regulated in neuroblastoma tumors.

It localises to the nucleus matrix. The protein resides in the cytoplasm. It is found in the cytoskeleton. In terms of biological role, actin-binding protein involved in the regulation of neuronal process formation and in differentiation of neural crest cells. Down-regulates transcription factor NF2L2/NRF2 by decreasing the rate of protein synthesis and not via a ubiquitin-mediated proteasomal degradation mechanism. The chain is Ectoderm-neural cortex protein 1 (ENC1) from Homo sapiens (Human).